A 34-amino-acid polypeptide reads, in one-letter code: PASPQKRAASPRRSPKKSPRKSPKKSPRKRSASP.

The tract at residues 1–34 (PASPQKRAASPRRSPKKSPRKSPKKSPRKRSASP) is disordered. Positions 9–34 (ASPRRSPKKSPRKSPKKSPRKRSASP) are enriched in basic residues.

This sequence belongs to the histone H1/H5 family. Sperm.

Its subcellular location is the nucleus. The protein resides in the chromosome. Functionally, histones H1 are necessary for the condensation of nucleosome chains into higher-order structures. The chain is Histone H1, sperm from Strongylocentrotus purpuratus (Purple sea urchin).